Reading from the N-terminus, the 107-residue chain is Iron-sulfur cluster assembly protein CyaY (107 aa).

Belongs to the frataxin family.

Its function is as follows. Involved in iron-sulfur (Fe-S) cluster assembly. May act as a regulator of Fe-S biogenesis. The sequence is that of Iron-sulfur cluster assembly protein CyaY from Neisseria gonorrhoeae (strain ATCC 700825 / FA 1090).